The following is a 284-amino-acid chain: Putative ABC transporter ATP-binding protein SCO5958 (284 aa).

One can recognise an ABC transporter domain in the interval 15–250; the sequence is VALRGAAFAY…DLLRRAGLRL (236 aa). Position 48–55 (48–55) interacts with ATP; sequence GRNGSGKT.

The protein belongs to the ABC transporter superfamily.

The protein resides in the cell membrane. Functionally, probably part of an ABC transporter complex. Responsible for energy coupling to the transport system. The chain is Putative ABC transporter ATP-binding protein SCO5958 from Streptomyces coelicolor (strain ATCC BAA-471 / A3(2) / M145).